A 224-amino-acid polypeptide reads, in one-letter code: Probable C-&gt;U-editing enzyme APOBEC-2 (224 aa).

The disordered stretch occupies residues methionine 1–glutamate 25. Residues glutamate 60 and histidine 98 each coordinate Zn(2+). Positions glycine 64–leucine 169 constitute a CMP/dCMP-type deaminase domain. The active-site Proton donor is the glutamate 100. The Zn(2+) site is built by cysteine 128 and cysteine 131.

The protein belongs to the cytidine and deoxycytidylate deaminase family. In terms of assembly, homotetramer. It depends on Zn(2+) as a cofactor.

It catalyses the reaction cytidine(6666) in apoB mRNA + H2O + H(+) = uridine(6666) in apoB mRNA + NH4(+). In terms of biological role, probable C to U editing enzyme whose physiological substrate is not yet known. Does not display detectable apoB mRNA editing. Has a low intrinsic cytidine deaminase activity. May play a role in the epigenetic regulation of gene expression through the process of active DNA demethylation. The polypeptide is Probable C-&gt;U-editing enzyme APOBEC-2 (APOBEC2) (Bos taurus (Bovine)).